Reading from the N-terminus, the 298-residue chain is ADP-ribosyl cyclase/cyclic ADP-ribose hydrolase 1 (298 aa).

The Cytoplasmic segment spans residues 1 to 21 (MPDYEFSPASGDRPRSWISKQ). Residues 22-42 (VLIVLGVCLPVILALAIWVGV) traverse the membrane as a helical; Signal-anchor for type II membrane protein segment. Residues 43 to 298 (LTWRQSSMGA…PEHPSCSVLM (256 aa)) are Extracellular-facing. 3 disulfides stabilise this stretch: Cys-64–Cys-80, Cys-97–Cys-178, and Cys-158–Cys-171. A glycan (N-linked (GlcNAc...) asparagine) is linked at Asn-98. Residue Cys-117 is part of the active site. An N-linked (GlcNAc...) asparagine glycan is attached at Asn-118. Asn-177 carries an N-linked (GlcNAc...) asparagine glycan. Residue Cys-199 is part of the active site. 2 N-linked (GlcNAc...) asparagine glycosylation sites follow: Asn-207 and Asn-268. Intrachain disulfides connect Cys-252–Cys-273 and Cys-285–Cys-294.

The protein belongs to the ADP-ribosyl cyclase family. As to quaternary structure, homodimer. As to expression, osteoclasts.

It is found in the cell membrane. The protein localises to the microsome membrane. Its subcellular location is the endoplasmic reticulum membrane. The enzyme catalyses NAD(+) = cyclic ADP-beta-D-ribose + nicotinamide + H(+). The catalysed reaction is 2'-phospho-cyclic ADP-ribose + nicotinate = nicotinate-adenine dinucleotide phosphate. It catalyses the reaction NAD(+) + H2O = ADP-D-ribose + nicotinamide + H(+). It carries out the reaction nicotinate + NADP(+) = nicotinate-adenine dinucleotide phosphate + nicotinamide. Functionally, synthesizes cyclic ADP-ribose (cADPR), a second messenger for glucose-induced insulin secretion. Synthesizes the Ca(2+) mobilizer nicotinate-adenine dinucleotide phosphate, NAADP(+), from 2'-phospho-cADPR and nicotinic acid, as well as from NADP(+) and nicotinic acid. Also has cADPR hydrolase activity. The protein is ADP-ribosyl cyclase/cyclic ADP-ribose hydrolase 1 (CD38) of Oryctolagus cuniculus (Rabbit).